Here is a 115-residue protein sequence, read N- to C-terminus: Holo-[acyl-carrier-protein] synthase (115 aa).

D8 and E50 together coordinate Mg(2+).

The protein belongs to the P-Pant transferase superfamily. AcpS family. It depends on Mg(2+) as a cofactor.

It localises to the cytoplasm. The enzyme catalyses apo-[ACP] + CoA = holo-[ACP] + adenosine 3',5'-bisphosphate + H(+). Its function is as follows. Transfers the 4'-phosphopantetheine moiety from coenzyme A to a Ser of acyl-carrier-protein. The protein is Holo-[acyl-carrier-protein] synthase of Pseudarthrobacter chlorophenolicus (strain ATCC 700700 / DSM 12829 / CIP 107037 / JCM 12360 / KCTC 9906 / NCIMB 13794 / A6) (Arthrobacter chlorophenolicus).